Consider the following 226-residue polypeptide: UPF0173 metal-dependent hydrolase Tpet_1587 (226 aa).

Belongs to the UPF0173 family.

The polypeptide is UPF0173 metal-dependent hydrolase Tpet_1587 (Thermotoga petrophila (strain ATCC BAA-488 / DSM 13995 / JCM 10881 / RKU-1)).